A 174-amino-acid polypeptide reads, in one-letter code: ATP synthase subunit delta (174 aa).

This sequence belongs to the ATPase delta chain family. F-type ATPases have 2 components, F(1) - the catalytic core - and F(0) - the membrane proton channel. F(1) has five subunits: alpha(3), beta(3), gamma(1), delta(1), epsilon(1). F(0) has three main subunits: a(1), b(2) and c(10-14). The alpha and beta chains form an alternating ring which encloses part of the gamma chain. F(1) is attached to F(0) by a central stalk formed by the gamma and epsilon chains, while a peripheral stalk is formed by the delta and b chains.

The protein localises to the cell inner membrane. Functionally, f(1)F(0) ATP synthase produces ATP from ADP in the presence of a proton or sodium gradient. F-type ATPases consist of two structural domains, F(1) containing the extramembraneous catalytic core and F(0) containing the membrane proton channel, linked together by a central stalk and a peripheral stalk. During catalysis, ATP synthesis in the catalytic domain of F(1) is coupled via a rotary mechanism of the central stalk subunits to proton translocation. Its function is as follows. This protein is part of the stalk that links CF(0) to CF(1). It either transmits conformational changes from CF(0) to CF(1) or is implicated in proton conduction. The chain is ATP synthase subunit delta from Neorickettsia sennetsu (strain ATCC VR-367 / Miyayama) (Ehrlichia sennetsu).